A 77-amino-acid chain; its full sequence is Large ribosomal subunit protein bL28 (77 aa).

A disordered region spans residues 1–20 (MSRVCQVTGKGPVTGNNISH).

Belongs to the bacterial ribosomal protein bL28 family.

This chain is Large ribosomal subunit protein bL28, found in Pseudomonas syringae pv. tomato (strain ATCC BAA-871 / DC3000).